The sequence spans 274 residues: Formamidopyrimidine-DNA glycosylase (274 aa).

Pro-2 acts as the Schiff-base intermediate with DNA in catalysis. Glu-3 serves as the catalytic Proton donor. Catalysis depends on Lys-60, which acts as the Proton donor; for beta-elimination activity. Positions 93 and 112 each coordinate DNA. Residues 240 to 274 (DVYGRKGETCRQCGTPITKTVVGGRGTHFCSVCQK) form an FPG-type zinc finger. Arg-264 (proton donor; for delta-elimination activity) is an active-site residue.

This sequence belongs to the FPG family. Monomer. Requires Zn(2+) as cofactor.

The catalysed reaction is Hydrolysis of DNA containing ring-opened 7-methylguanine residues, releasing 2,6-diamino-4-hydroxy-5-(N-methyl)formamidopyrimidine.. The enzyme catalyses 2'-deoxyribonucleotide-(2'-deoxyribose 5'-phosphate)-2'-deoxyribonucleotide-DNA = a 3'-end 2'-deoxyribonucleotide-(2,3-dehydro-2,3-deoxyribose 5'-phosphate)-DNA + a 5'-end 5'-phospho-2'-deoxyribonucleoside-DNA + H(+). Involved in base excision repair of DNA damaged by oxidation or by mutagenic agents. Acts as a DNA glycosylase that recognizes and removes damaged bases. Has a preference for oxidized purines, such as 7,8-dihydro-8-oxoguanine (8-oxoG). Has AP (apurinic/apyrimidinic) lyase activity and introduces nicks in the DNA strand. Cleaves the DNA backbone by beta-delta elimination to generate a single-strand break at the site of the removed base with both 3'- and 5'-phosphates. In Halalkalibacterium halodurans (strain ATCC BAA-125 / DSM 18197 / FERM 7344 / JCM 9153 / C-125) (Bacillus halodurans), this protein is Formamidopyrimidine-DNA glycosylase (mutM).